Consider the following 336-residue polypeptide: Galactinol synthase 6 (336 aa).

Lys-106 is an active-site residue. Mn(2+)-binding residues include Asp-122, Asp-124, and His-260.

The protein belongs to the glycosyltransferase 8 family. Galactosyltransferase subfamily. A divalent metal cation serves as cofactor.

Its subcellular location is the cytoplasm. It carries out the reaction myo-inositol + UDP-alpha-D-galactose = alpha-D-galactosyl-(1-&gt;3)-1D-myo-inositol + UDP + H(+). Functionally, galactinol synthase involved in the biosynthesis of raffinose family oligosaccharides (RFOs) that function as osmoprotectants. May promote plant stress tolerance. The sequence is that of Galactinol synthase 6 (GOLS6) from Arabidopsis thaliana (Mouse-ear cress).